The following is a 143-amino-acid chain: Large ribosomal subunit protein uL11 (143 aa).

It belongs to the universal ribosomal protein uL11 family. Part of the ribosomal stalk of the 50S ribosomal subunit. Interacts with L10 and the large rRNA to form the base of the stalk. L10 forms an elongated spine to which L12 dimers bind in a sequential fashion forming a multimeric L10(L12)X complex. One or more lysine residues are methylated.

Forms part of the ribosomal stalk which helps the ribosome interact with GTP-bound translation factors. This chain is Large ribosomal subunit protein uL11, found in Variovorax paradoxus (strain S110).